A 255-amino-acid chain; its full sequence is 3-dehydroquinate dehydratase (255 aa).

3-dehydroquinate-binding positions include 46–48 (EWR) and Arg82. His143 serves as the catalytic Proton donor/acceptor. Lys170 serves as the catalytic Schiff-base intermediate with substrate. Arg213, Ser232, and Gln236 together coordinate 3-dehydroquinate.

It belongs to the type-I 3-dehydroquinase family. Homodimer.

The catalysed reaction is 3-dehydroquinate = 3-dehydroshikimate + H2O. The protein operates within metabolic intermediate biosynthesis; chorismate biosynthesis; chorismate from D-erythrose 4-phosphate and phosphoenolpyruvate: step 3/7. Its function is as follows. Involved in the third step of the chorismate pathway, which leads to the biosynthesis of aromatic amino acids. Catalyzes the cis-dehydration of 3-dehydroquinate (DHQ) and introduces the first double bond of the aromatic ring to yield 3-dehydroshikimate. In Bacillus subtilis (strain 168), this protein is 3-dehydroquinate dehydratase.